We begin with the raw amino-acid sequence, 227 residues long: Lipoprotein-releasing system ATP-binding protein LolD (227 aa).

Residues 5 to 227 form the ABC transporter domain; it reads LICQNITKHY…QDGILRESNS (223 aa). 41–48 is an ATP binding site; the sequence is GSSGSGKS.

The protein belongs to the ABC transporter superfamily. Lipoprotein translocase (TC 3.A.1.125) family. As to quaternary structure, the complex is composed of two ATP-binding proteins (LolD) and two transmembrane proteins (LolC and LolE).

Its subcellular location is the cell inner membrane. Functionally, part of the ABC transporter complex LolCDE involved in the translocation of mature outer membrane-directed lipoproteins, from the inner membrane to the periplasmic chaperone, LolA. Responsible for the formation of the LolA-lipoprotein complex in an ATP-dependent manner. This chain is Lipoprotein-releasing system ATP-binding protein LolD, found in Histophilus somni (strain 129Pt) (Haemophilus somnus).